We begin with the raw amino-acid sequence, 483 residues long: Putative inorganic phosphate cotransporter (483 aa).

The next 7 membrane-spanning stretches (helical) occupy residues 64 to 84 (YILS…GILA), 90 to 110 (LRFL…VPVA), 187 to 207 (IFYV…IFVY), 292 to 312 (LPYL…DWMI), 349 to 369 (ALTL…YSGF), 383 to 403 (FLMS…PIAA), and 420 to 440 (IVFF…NIFG). The segment at 447-483 (WDNPSEDEQKPALESSSTTNPPRLSNGSSAPRAISSS) is disordered. The segment covering 460 to 483 (ESSSTTNPPRLSNGSSAPRAISSS) has biased composition (polar residues).

Belongs to the major facilitator superfamily. Sodium/anion cotransporter family.

It is found in the membrane. Functionally, may be an inorganic phosphate cotransporter. The polypeptide is Putative inorganic phosphate cotransporter (Picot) (Drosophila ananassae (Fruit fly)).